The sequence spans 299 residues: Oxygen-dependent coproporphyrinogen-III oxidase (299 aa).

Ser-92 contributes to the substrate binding site. His-96 and His-106 together coordinate Mn(2+). Residue His-106 is the Proton donor of the active site. Residue 108-110 (NVR) coordinates substrate. His-145 and His-175 together coordinate Mn(2+). The interval 240 to 275 (YVEFNLVWDRGTLFGLQTGGRTESILMSMPPLVRWE) is important for dimerization. 258-260 (GGR) provides a ligand contact to substrate.

The protein belongs to the aerobic coproporphyrinogen-III oxidase family. In terms of assembly, homodimer. Requires Mn(2+) as cofactor.

The protein resides in the cytoplasm. It carries out the reaction coproporphyrinogen III + O2 + 2 H(+) = protoporphyrinogen IX + 2 CO2 + 2 H2O. It functions in the pathway porphyrin-containing compound metabolism; protoporphyrin-IX biosynthesis; protoporphyrinogen-IX from coproporphyrinogen-III (O2 route): step 1/1. Involved in the heme biosynthesis. Catalyzes the aerobic oxidative decarboxylation of propionate groups of rings A and B of coproporphyrinogen-III to yield the vinyl groups in protoporphyrinogen-IX. This chain is Oxygen-dependent coproporphyrinogen-III oxidase, found in Escherichia coli O8 (strain IAI1).